Here is a 198-residue protein sequence, read N- to C-terminus: Nucleoid occlusion factor SlmA (198 aa).

In terms of domain architecture, HTH tetR-type spans 10–70 (NRREEILQSL…SLIEFIEDSL (61 aa)). Residues 33 to 52 (TTAKLAASVGVSEAALYRHF) constitute a DNA-binding region (H-T-H motif). Residues 117–144 (EQDRLQGRINQLFERIEAQLRQVLREKR) adopt a coiled-coil conformation.

The protein belongs to the nucleoid occlusion factor SlmA family. Homodimer. Interacts with FtsZ.

The protein localises to the cytoplasm. Its subcellular location is the nucleoid. Functionally, required for nucleoid occlusion (NO) phenomenon, which prevents Z-ring formation and cell division over the nucleoid. Acts as a DNA-associated cell division inhibitor that binds simultaneously chromosomal DNA and FtsZ, and disrupts the assembly of FtsZ polymers. SlmA-DNA-binding sequences (SBS) are dispersed on non-Ter regions of the chromosome, preventing FtsZ polymerization at these regions. The sequence is that of Nucleoid occlusion factor SlmA from Salmonella paratyphi A (strain ATCC 9150 / SARB42).